The sequence spans 122 residues: Large ribosomal subunit protein uL14 (122 aa).

This sequence belongs to the universal ribosomal protein uL14 family. As to quaternary structure, part of the 50S ribosomal subunit. Forms a cluster with proteins L3 and L19. In the 70S ribosome, L14 and L19 interact and together make contacts with the 16S rRNA in bridges B5 and B8.

Binds to 23S rRNA. Forms part of two intersubunit bridges in the 70S ribosome. This is Large ribosomal subunit protein uL14 from Rhodospirillum centenum (strain ATCC 51521 / SW).